Consider the following 417-residue polypeptide: Diphosphomevalonate decarboxylase 1 (417 aa).

A (R)-5-diphosphomevalonate-binding site is contributed by 22 to 25 (YWGK). The short motif at 39 to 47 (RVSLDPDHL) is the Peroxisomal targeting signal PTS2 element. (R)-5-diphosphomevalonate-binding positions include arginine 77, 160–165 (SGSACR), and threonine 216.

This sequence belongs to the diphosphomevalonate decarboxylase family. Homodimer.

The protein localises to the peroxisome. It catalyses the reaction (R)-5-diphosphomevalonate + ATP = isopentenyl diphosphate + ADP + phosphate + CO2. It participates in isoprenoid biosynthesis; isopentenyl diphosphate biosynthesis via mevalonate pathway; isopentenyl diphosphate from (R)-mevalonate: step 3/3. Its function is as follows. Performs the first committed step in the biosynthesis of isoprene-containing compounds such as sterols and terpenoids. Component of the triterpene saponins (e.g. ginsenosides or panaxosides) and phytosterols biosynthetic pathways. Catalyzes the conversion of mevalonate diphosphate to isopentenyl diphosphate (IPP). In Panax ginseng (Korean ginseng), this protein is Diphosphomevalonate decarboxylase 1.